Reading from the N-terminus, the 78-residue chain is Biotin synthase auxiliary protein (78 aa).

Belongs to the BsaP family. Iron-sulfur cluster serves as cofactor.

Its function is as follows. Required for the activity of the biotin synthase BioB. This Mycolicibacterium smegmatis (strain ATCC 700084 / mc(2)155) (Mycobacterium smegmatis) protein is Biotin synthase auxiliary protein.